The chain runs to 305 residues: Ribonuclease BN (305 aa).

Residues His-64, His-66, Asp-68, His-69, His-141, Asp-212, and His-270 each contribute to the Zn(2+) site. The active-site Proton acceptor is the Asp-68.

This sequence belongs to the RNase Z family. RNase BN subfamily. As to quaternary structure, homodimer. Zn(2+) is required as a cofactor.

Functionally, zinc phosphodiesterase, which has both exoribonuclease and endoribonuclease activities. This Escherichia coli O81 (strain ED1a) protein is Ribonuclease BN.